The primary structure comprises 188 residues: HTH-type transcriptional regulator LmrA (188 aa).

Residues 4 to 64 (GDSREKILSA…IEAVNEMKEY (61 aa)) form the HTH tetR-type domain. The segment at residues 27–46 (GLNQIIKESGAPKGSLYYHF) is a DNA-binding region (H-T-H motif).

Acts as a repressor of the lincomycin-resistance (lmrAB) and yxaGH operons. This Bacillus subtilis (strain 168) protein is HTH-type transcriptional regulator LmrA (lmrA).